Here is a 241-residue protein sequence, read N- to C-terminus: Acetoacetyl-CoA reductase (241 aa).

NADP(+) is bound by residues 12–14 (RGI) and 82–86 (NAGIT). Residues aspartate 88 and 141-144 (QMGQ) each bind substrate. Tyrosine 147 acts as the Proton acceptor in catalysis. An NADP(+)-binding site is contributed by 177 to 180 (PGYI). Residue 178–179 (GY) participates in substrate binding.

The protein belongs to the short-chain dehydrogenases/reductases (SDR) family.

Its subcellular location is the cytoplasm. The enzyme catalyses a (3R)-3-hydroxyacyl-CoA + NADP(+) = a 3-oxoacyl-CoA + NADPH + H(+). Its pathway is biopolymer metabolism; poly-(R)-3-hydroxybutanoate biosynthesis. This is Acetoacetyl-CoA reductase from Shinella zoogloeoides (Crabtreella saccharophila).